The chain runs to 716 residues: Myogenesis-regulating glycosidase (716 aa).

A compositionally biased stretch (polar residues) spans 1-11; sequence MSQNLQETSQA. Residues 1-26 are disordered; the sequence is MSQNLQETSQAYPRHRPGSHAGPKSL. Topologically, residues 1–55 are cytoplasmic; sequence MSQNLQETSQAYPRHRPGSHAGPKSLKVTPRATMYTFLPDNFSPAKPKPTKELRP. Residues 56-76 traverse the membrane as a helical; Signal-anchor for type II membrane protein segment; it reads LLCSAVLGLLLVLAAVVAWCY. Topologically, residues 77 to 716 are extracellular; sequence YSASLRKAER…DEVAYFTWAS (640 aa). N-linked (GlcNAc...) asparagine glycosylation is found at Asn239, Asn249, and Asn455. Catalysis depends on residues Asp462 and Glu465. Residue Asp527 is the Proton donor of the active site.

This sequence belongs to the glycosyl hydrolase 31 family. Interacts with IGF2; this interaction is required for IGF2 secretion. Expressed in brain, liver, spleen, skeletal muscle, heart, lung and kidney. High expression is observed in the cerebellum, specifically in astrocytes. Highly expressed in skeletal muscle (at protein level).

The protein localises to the nucleus membrane. It is found in the endoplasmic reticulum membrane. Its function is as follows. Putative glycosidase. Promotes myogenesis by activating AKT signaling through the maturation and secretion of IGF2. In Mus musculus (Mouse), this protein is Myogenesis-regulating glycosidase (Myorg).